The primary structure comprises 380 residues: MSQNKPAVNPPLWLLAELTYRCPLQCPYCSNPLDFARQEKELTTEQWIEVFRQARAMGSVQLGFSGGEPLTRKDLPELIRAARDLGFYTNLITSGIGLTESKLDAFSEAGLDHIQISFQASDEVLNAALAGNKKAFQQKLAMARAVKARDYPMVLNFVLHRHNIDQLDKIIELCIELEADDVELATCQFYGWAFLNREGLLPTREQIARAEQVVADYRQKMAASGNLTNLLFVTPDYYEERPKGCMGGWGSIFLSVTPEGTALPCHSARQLPVAFPSVLEQSLESIWYDSFGFNRYRGYDWMPEPCRSCDEKEKDFGGCRCQAFMLTGSADNADPVCSKSPHHHKILEARREAACSDIKVSQLQFRNRTRSQLIYKTREL.

A Radical SAM core domain is found at 8–223; that stretch reads VNPPLWLLAE…VADYRQKMAA (216 aa). [4Fe-4S] cluster contacts are provided by Cys22, Cys26, and Cys29.

The protein belongs to the radical SAM superfamily. PqqE family. As to quaternary structure, interacts with PqqD. The interaction is necessary for activity of PqqE. [4Fe-4S] cluster is required as a cofactor.

The catalysed reaction is [PQQ precursor protein] + S-adenosyl-L-methionine = E-Y cross-linked-[PQQ precursor protein] + 5'-deoxyadenosine + L-methionine + H(+). Its pathway is cofactor biosynthesis; pyrroloquinoline quinone biosynthesis. Catalyzes the cross-linking of a glutamate residue and a tyrosine residue in the PqqA protein as part of the biosynthesis of pyrroloquinoline quinone (PQQ). This is PqqA peptide cyclase from Klebsiella pneumoniae (strain 342).